The sequence spans 315 residues: Glycine--tRNA ligase alpha subunit (315 aa).

The protein belongs to the class-II aminoacyl-tRNA synthetase family. Tetramer of two alpha and two beta subunits.

The protein resides in the cytoplasm. The catalysed reaction is tRNA(Gly) + glycine + ATP = glycyl-tRNA(Gly) + AMP + diphosphate. In Sorangium cellulosum (strain So ce56) (Polyangium cellulosum (strain So ce56)), this protein is Glycine--tRNA ligase alpha subunit.